The following is a 455-amino-acid chain: L-serine dehydratase (455 aa).

Belongs to the iron-sulfur dependent L-serine dehydratase family. It depends on [4Fe-4S] cluster as a cofactor.

It carries out the reaction L-serine = pyruvate + NH4(+). Its pathway is carbohydrate biosynthesis; gluconeogenesis. This Streptomyces coelicolor (strain ATCC BAA-471 / A3(2) / M145) protein is L-serine dehydratase (sdaA).